Reading from the N-terminus, the 141-residue chain is Galactose-6-phosphate isomerase subunit LacA 1 (141 aa).

Belongs to the LacAB/RpiB family. As to quaternary structure, heteromultimeric protein consisting of LacA and LacB.

It carries out the reaction aldehydo-D-galactose 6-phosphate = keto-D-tagatose 6-phosphate. It functions in the pathway carbohydrate metabolism; D-galactose 6-phosphate degradation; D-tagatose 6-phosphate from D-galactose 6-phosphate: step 1/1. The chain is Galactose-6-phosphate isomerase subunit LacA 1 from Streptococcus pyogenes serotype M3 (strain SSI-1).